Here is an 865-residue protein sequence, read N- to C-terminus: Catenin alpha-2 (865 aa).

A compositionally biased stretch (basic and acidic residues) spans 823-839 (PEKKPLVKREKPEECQT). Residues 823 to 851 (PEKKPLVKREKPEECQTRVRRGSQKKHIS) are disordered. The span at 840–850 (RVRRGSQKKHI) shows a compositional bias: basic residues.

This sequence belongs to the vinculin/alpha-catenin family.

The protein resides in the cell membrane. Its subcellular location is the cytoplasm. It is found in the cytoskeleton. The protein localises to the cell junction. It localises to the adherens junction. The protein resides in the cell projection. Its subcellular location is the axon. It is found in the nucleus. May function as a linker between cadherin adhesion receptors and the cytoskeleton to regulate cell-cell adhesion and differentiation in the nervous system. In Danio rerio (Zebrafish), this protein is Catenin alpha-2 (Ctnna2).